A 63-amino-acid chain; its full sequence is uncharacterized protein (63 aa).

This is an uncharacterized protein from Escherichia coli (strain K12).